Reading from the N-terminus, the 398-residue chain is G2/mitotic-specific cyclin-B2 (398 aa).

Phosphothreonine is present on threonine 8. Serine 11, serine 77, and serine 92 each carry phosphoserine. Threonine 94 carries the phosphothreonine modification. Residues serine 99, serine 392, and serine 398 each carry the phosphoserine modification.

It belongs to the cyclin family. Cyclin AB subfamily. In terms of assembly, interacts with the CDK1 protein kinase to form a serine/threonine kinase holoenzyme complex also known as maturation promoting factor (MPF). The cyclin subunit imparts substrate specificity to the complex.

Functionally, essential for the control of the cell cycle at the G2/M (mitosis) transition. The sequence is that of G2/mitotic-specific cyclin-B2 (CCNB2) from Homo sapiens (Human).